We begin with the raw amino-acid sequence, 345 residues long: Myb/SANT-like DNA-binding domain-containing protein 4 (345 aa).

The Myb-like domain maps to 4–77 (LKRKRKSNFS…EVKRRYLDWR (74 aa)). Lys9 is covalently cross-linked (Glycyl lysine isopeptide (Lys-Gly) (interchain with G-Cter in SUMO2)). Ser106 carries the post-translational modification Phosphoserine. Glycyl lysine isopeptide (Lys-Gly) (interchain with G-Cter in SUMO2) cross-links involve residues Lys114 and Lys142. Positions 143–175 (VEEEERDPQSPEFEIEEEEEMLSSVIPDSRREN) are disordered. Residue Thr188 is modified to Phosphothreonine. Residues 203 to 345 (LLVNIEKQKL…LRIQKEGHLQ (143 aa)) adopt a coiled-coil conformation. Residues Lys237, Lys254, and Lys273 each participate in a glycyl lysine isopeptide (Lys-Gly) (interchain with G-Cter in SUMO2) cross-link.

This is Myb/SANT-like DNA-binding domain-containing protein 4 (MSANTD4) from Homo sapiens (Human).